A 250-amino-acid polypeptide reads, in one-letter code: DNA repair protein RecO (250 aa).

It belongs to the RecO family.

Involved in DNA repair and RecF pathway recombination. The chain is DNA repair protein RecO from Beijerinckia indica subsp. indica (strain ATCC 9039 / DSM 1715 / NCIMB 8712).